The chain runs to 1546 residues: Lysophospholipase NTE1 (1546 aa).

Residues 1–45 lie on the Cytoplasmic side of the membrane; it reads MKDSTEALNSIAFAVDTTLSSILPSSLAPPSAPPATSSFLKSIWY. A helical transmembrane segment spans residues 46–66; the sequence is AFWWLWSMVVFKIMNIILLYI. Residues 67–81 lie on the Lumenal side of the membrane; that stretch reads PSKIMNALSINFEIT. The chain crosses the membrane as a helical span at residues 82–102; that stretch reads LNLSSILVALSAIITVCFLVV. The Cytoplasmic segment spans residues 103–1546; sequence RYKYLTGYSK…KKVLYRRNSI (1444 aa). Residues 689-820 and 816-965 each bind a nucleoside 3',5'-cyclic phosphate; these read PTEF…LKKL and KLKK…VASK. Positions 1239–1403 constitute a PNPLA domain; the sequence is LVLGGGGSRG…LDNLPVSEMK (165 aa). Positions 1243–1248 match the GXGXXG motif; it reads GGGSRG. The short motif at 1270-1274 is the GXSXG element; the sequence is GTSIG. Residue Ser-1272 is the Nucleophile of the active site. The Proton acceptor role is filled by Asp-1390. The short motif at 1390 to 1392 is the DGA/G element; it reads DGG.

This sequence belongs to the NTE family.

It is found in the endoplasmic reticulum membrane. It carries out the reaction a 1-acyl-sn-glycero-3-phosphocholine + H2O = sn-glycerol 3-phosphocholine + a fatty acid + H(+). Inhibited by organophosphorus esters. Intracellular phospholipase B that catalyzes the double deacylation of phosphatidylcholine (PC) to glycerophosphocholine (GroPCho). Plays an important role in membrane lipid homeostasis. Responsible for the rapid PC turnover in response to inositol, elevated temperatures, or when choline is present in the growth medium. The protein is Lysophospholipase NTE1 (NTE1) of Scheffersomyces stipitis (strain ATCC 58785 / CBS 6054 / NBRC 10063 / NRRL Y-11545) (Yeast).